We begin with the raw amino-acid sequence, 114 residues long: Ribonuclease P protein component (114 aa).

The protein belongs to the RnpA family. As to quaternary structure, consists of a catalytic RNA component (M1 or rnpB) and a protein subunit.

The enzyme catalyses Endonucleolytic cleavage of RNA, removing 5'-extranucleotides from tRNA precursor.. Its function is as follows. RNaseP catalyzes the removal of the 5'-leader sequence from pre-tRNA to produce the mature 5'-terminus. It can also cleave other RNA substrates such as 4.5S RNA. The protein component plays an auxiliary but essential role in vivo by binding to the 5'-leader sequence and broadening the substrate specificity of the ribozyme. In Buchnera aphidicola subsp. Schizaphis graminum (strain Sg), this protein is Ribonuclease P protein component.